The chain runs to 405 residues: L-carnitine CoA-transferase (405 aa).

Residues Lys-97 and Arg-104 each contribute to the CoA site. Asp-169 serves as the catalytic Nucleophile.

It belongs to the CoA-transferase III family. CaiB subfamily. As to quaternary structure, homodimer.

Its subcellular location is the cytoplasm. It catalyses the reaction crotonobetainyl-CoA + (R)-carnitine = crotonobetaine + (R)-carnitinyl-CoA. The enzyme catalyses 4-(trimethylamino)butanoyl-CoA + (R)-carnitine = (R)-carnitinyl-CoA + 4-(trimethylamino)butanoate. Its pathway is amine and polyamine metabolism; carnitine metabolism. Its function is as follows. Catalyzes the reversible transfer of the CoA moiety from gamma-butyrobetainyl-CoA to L-carnitine to generate L-carnitinyl-CoA and gamma-butyrobetaine. Is also able to catalyze the reversible transfer of the CoA moiety from gamma-butyrobetainyl-CoA or L-carnitinyl-CoA to crotonobetaine to generate crotonobetainyl-CoA. The chain is L-carnitine CoA-transferase (caiB) from Escherichia coli O157:H7.